The primary structure comprises 30 residues: Toxic protein AapA1 (30 aa).

It belongs to the AapA toxin family.

Its subcellular location is the cell inner membrane. Its activity is regulated as follows. Transcription of the aapA1 gene generates a full-length transcript whose folding impedes translation. Processing of the 3' end of the aapA1 message generates a shorter transcript that becomes translatable after a structural rearrangement. The processing also makes it more susceptible to forming dsRNA with IsoA1 which leads to duplex RNA degradation by RNase 3 (rnc). May be involved in response to oxidative stress. Toxic component of a type I toxin-antitoxin (TA) system. When overexpression is induced in situ in the absence of its cognate antisense RNA antitoxin IsoA1 it leads to cell growth arrest and cell death without lysis. Neutralized by IsoA1 RNA which forms an extensive duplex with the mRNA. Binds artificial prokaryotic and eukaryotic lipid membranes, with 30-fold higher affinity for prokaryotic membranes. Molecular dynamics suggests the peptide penetrates the membrane leading to lipid reorganization and thinning of the bilayer. Induction of toxin in the absence of antitoxin RNA causes a fast conversion of cells from spiral-shaped to coccoid forms; cells have no visible membrane defects and resemble wild-type 'aging coccoids'. Toxin causes a moderate decrease in membrane potential and ATP content and alterations in peptidoglycan muropeptide abundance; GlcNAc-MurNAc dipeptides increase while GlcNAc-MurNAc tripeptides decrease (i.e. a faster phenocopy of cell aging). Deletion of all 6 AapA/IsoA TA loci in strain B128 leads to slower than wild-type conversion of H2O2-treated cells to the coccoid form. This suggests oxidative stress triggers coccoid transformation via these type I TA systems, although other factors eventually drive the morphology change. The protein is Toxic protein AapA1 of Helicobacter pylori (strain ATCC 700392 / 26695) (Campylobacter pylori).